The sequence spans 817 residues: Dolichyl-phosphate-mannose--protein mannosyltransferase 1 (817 aa).

Ser2 carries the post-translational modification N-acetylserine. Over 2–50 (SEEKTYKRVEQDDPVPELDIKQGPVRPFIVTDPSAELASLRTMVTLKEK) the chain is Cytoplasmic. The chain crosses the membrane as a helical span at residues 51-70 (LLVACLAVFTAVIRLHGLAW). Residues 71-135 (PDSVVFDEVH…DSFPSTTPYV (65 aa)) lie on the Lumenal side of the membrane. Residues 136 to 154 (LMRFFSASLGALTVILMYM) traverse the membrane as a helical segment. Residues 155–179 (TLRYSGVRMWVALMSAICFAVENSY) are Cytoplasmic-facing. Residues 180-200 (VTISRYILLDAPLMFFIAAAV) traverse the membrane as a helical segment. The Lumenal portion of the chain corresponds to 201–234 (YSFKKYEMYPANSLNAYKSLLATGIALGMASSSK). Residues 235–259 (WVGLFTVTWVGLLCIWRLWFMIGDL) form a helical membrane-spanning segment. Over 260–273 (TKSSKSIFKVAFAK) the chain is Cytoplasmic. A helical membrane pass occupies residues 274–291 (LAFLLGVPFALYLVFFYI). Topologically, residues 292-584 (HFQSLTLDGD…GENNRNVYLL (293 aa)) are lumenal. 3 consecutive MIR domains span residues 324-378 (VADV…LELY), 388-448 (FQNL…VEID), and 459-514 (ERVI…VENN). N-linked (GlcNAc...) asparagine glycosylation is found at Asn390 and Asn513. Residues 585 to 605 (GNAIVWWAVTAFIGIFGLIVI) form a helical membrane-spanning segment. Residues 606–685 (TELFSWQLGK…SYVFRSKRQM (80 aa)) lie on the Cytoplasmic side of the membrane. Residues 686–710 (GYAVVITFLAASVYFFKSFSPIIYG) traverse the membrane as a helical segment. Over 711-817 (TPWTQELCQK…LKVEKRAVLE (107 aa)) the chain is Lumenal. An N-linked (GlcNAc...) asparagine glycan is attached at Asn743.

The protein belongs to the glycosyltransferase 39 family. In terms of assembly, PMT1 and PMT2 form a functional heterodimer. The complex interacts with endoplasmic reticulum proteins EMP24, ERV25, ERP1, ERP2, CDC48, HRD1, USA1, YOS9, ERO1, PDI1, UBR1, Cue4, DFM1 and TED1. Forms also a minor complex with PMT3.

The protein localises to the endoplasmic reticulum membrane. The catalysed reaction is a di-trans,poly-cis-dolichyl beta-D-mannosyl phosphate + L-seryl-[protein] = 3-O-(alpha-D-mannosyl)-L-seryl-[protein] + a di-trans,poly-cis-dolichyl phosphate + H(+). It carries out the reaction a di-trans,poly-cis-dolichyl beta-D-mannosyl phosphate + L-threonyl-[protein] = 3-O-(alpha-D-mannosyl)-L-threonyl-[protein] + a di-trans,poly-cis-dolichyl phosphate + H(+). Its pathway is protein modification; protein glycosylation. Its function is as follows. Protein O-mannosyltransferase involved in O-glycosylation which is essential for cell wall rigidity. Forms a heterodimeric complex with PMT2 and more rarely with PMT3 to transfer mannose from Dol-P-mannose to Ser or Thr residues on proteins. The PMT1-PMT2 complex participates in oxidative protein folding, ER-associated protein degradation (ERAD), as well as ER export. Required for incorporation of proteins in the cell wall. In Saccharomyces cerevisiae (strain ATCC 204508 / S288c) (Baker's yeast), this protein is Dolichyl-phosphate-mannose--protein mannosyltransferase 1.